The primary structure comprises 539 residues: Protein mushroom body miniature (539 aa).

A compositionally biased stretch (polar residues) spans 1–11; that stretch reads MHNSGGQSGWN. A disordered region spans residues 1-345; sequence MHNSGGQSGW…EDDKKARKQK (345 aa). Positions 67–79 are enriched in basic and acidic residues; that stretch reads KFRDPQQELDNHQ. The segment covering 80–89 has biased composition (basic residues); it reads PNKRGGRRNR. The span at 90–101 shows a compositional bias: gly residues; it reads GGGGGGGGWGGR. Residues 199-208 are compositionally biased toward basic and acidic residues; that stretch reads IKKEKEMEHK. Residues 268–289 show a composition bias toward low complexity; that stretch reads VASTPKPKAVKPVSSSDSSTSD. 2 positions are modified to phosphoserine: S288 and S290. T292 and T327 each carry phosphothreonine. Positions 327–336 are enriched in acidic residues; it reads TDEEESTEPE. Residue S332 is modified to Phosphoserine. T333 bears the Phosphothreonine mark. CCHC-type zinc fingers lie at residues 354–367 and 371–386; these read CGICDKKGHTSFQC and CRNCSGSYHGLKNCPN. The tract at residues 421–513 is disordered; sequence VTAPVSAKPK…AASLPPQVFP (93 aa). Residues 428–447 show a composition bias toward basic residues; the sequence is KPKKDKKASIKKIKKSSQKR. A compositionally biased stretch (acidic residues) spans 456 to 480; sequence DEEDDEEDDDEDEDDSSESDDSESS.

Post-translationally, may be phosphorylated in vivo by CkIIalpha. mbm and CkIIalpha colocalize to the nucleolus and mbm is phosphorylated in vitro by CkIIalpha. Shows widespread expression in third instar larval brain with no apparent difference between males and females (at protein level). Detected at low levels in the mushroom body neuropil and is also expressed in many cells of the brain outside the mushroom body (at protein level). Not detected in third instar larval brain cells in anaphase (at protein level).

The protein localises to the nucleus. The protein resides in the nucleolus. It is found in the cytoplasm. Functionally, required for small ribosomal subunit biogenesis in neuroblasts. Plays a role in mushroom body development. This chain is Protein mushroom body miniature, found in Drosophila melanogaster (Fruit fly).